Reading from the N-terminus, the 1075-residue chain is Protein nervous wreck (1075 aa).

An F-BAR domain is found at 11–289; sequence VKFLKNLHTE…QAQQLTREYN (279 aa). Disordered regions lie at residues 361–381 and 431–536; these read LRDSGQRTDPNDPNGPDLDTK and SASS…DEPI. Over residues 431–453 the composition is skewed to polar residues; it reads SASSISMRTDASGQGENPSSDSF. Basic and acidic residues predominate over residues 469-482; sequence PKQEQQLSRDRTFS. The segment covering 493–512 has biased composition (low complexity); it reads SAAAASSAAAASSSMMASSA. SH3 domains follow at residues 542–603 and 658–721; these read EAIF…IDQE and SDVE…ECDE. Disordered stretches follow at residues 722–747, 769–837, and 864–917; these read MGEPLSEGGDESPPPTAAPTFALPPA, SQDT…EKGA, and GADK…EGNA. 2 stretches are compositionally biased toward pro residues: residues 733–747 and 809–818; these read SPPPTAAPTFALPPA and QPPPSLPPPQ. Positions 819-837 are enriched in low complexity; that stretch reads LAKAGGSAPGSGSKVEKGA. The span at 883–897 shows a compositional bias: basic and acidic residues; sequence VSKEQPAEVAKKPDI.

Homodimer. Interacts (via SH3 domain 1) with WASp. Interacts (via SH3 domain 1) with shi/dynamin. Interacts (via SH3 domain 2) with Dap160. Interacts (via F-BAR domain) with SH3PX1. Interacts (via SH3 domain 2) with Snx16. Identified in a complex with Syn and Syt1. Detected in larval body wall muscle. Detected at the neuromuscular junction, on motoneuron axons and axon terminals, at synaptic boutons in the periactive zone surrounding the synapse (at protein level). Detected on motoneuron axons and axon terminals, at synaptic boutons in the periactive zone surrounding the synapse.

It localises to the endomembrane system. Its subcellular location is the synapse. It is found in the cell projection. The protein localises to the axon. The protein resides in the presynaptic cell membrane. It localises to the cytoplasmic vesicle. Its subcellular location is the secretory vesicle. It is found in the synaptic vesicle. The protein localises to the recycling endosome. In terms of biological role, adapter protein that provides a link between vesicular membrane traffic and the actin assembly machinery. Acts together with Cdc42 to stimulate actin nucleation mediated by WASp and the ARP2/3 complex. Binds to membranes enriched in phosphatidylinositol 4,5-bisphosphate and causes local membrane deformation. Required for normal structure and function of synapses at the neuromuscular junction. Plays a role in synaptic vesicle trafficking. Required for the release of a normal number of synaptic vesicles per action potential. This Drosophila melanogaster (Fruit fly) protein is Protein nervous wreck.